The primary structure comprises 205 residues: Ras-related protein Rab-18-B (205 aa).

12 residues coordinate GTP: serine 17, glycine 20, lysine 21, serine 22, serine 23, aspartate 34, proline 35, threonine 40, glycine 66, lysine 123, aspartate 125, and alanine 152. Mg(2+) is bound at residue serine 22. 2 short sequence motifs (switch) span residues aspartate 31–phenylalanine 45 and aspartate 63–glycine 80. Threonine 40 contributes to the Mg(2+) binding site. A lipid anchor (S-palmitoyl cysteine) is attached at cysteine 198. The residue at position 202 (cysteine 202) is a Cysteine methyl ester. Residue cysteine 202 is the site of S-geranylgeranyl cysteine attachment. Positions serine 203 to valine 205 are cleaved as a propeptide — removed in mature form.

This sequence belongs to the small GTPase superfamily. Rab family. Requires Mg(2+) as cofactor.

The protein localises to the endoplasmic reticulum membrane. It is found in the golgi apparatus. The protein resides in the cis-Golgi network membrane. Its subcellular location is the lipid droplet. It localises to the apical cell membrane. The enzyme catalyses GTP + H2O = GDP + phosphate + H(+). Its activity is regulated as follows. Regulated by guanine nucleotide exchange factors (GEFs) which promote the exchange of bound GDP for free GTP. Regulated by GTPase activating proteins (GAPs) which increase the GTP hydrolysis activity at the ER membrane. Inhibited by GDP dissociation inhibitors (GDIs) which prevent Rab-GDP dissociation. The small GTPases Rab are key regulators of intracellular membrane trafficking, from the formation of transport vesicles to their fusion with membranes. Rabs cycle between an inactive GDP-bound form and an active GTP-bound form that is able to recruit to membranes different sets of downstream effectors directly responsible for vesicle formation, movement, tethering and fusion. Required for the localization of ZFYVE1 to lipid droplets and for its function in mediating the formation of endoplasmic reticulum-lipid droplets (ER-LD) contacts. Also required for maintaining endoplasmic reticulum structure. Plays a role in apical endocytosis/recycling. Plays a key role in eye and brain development and neurodegeneration. The polypeptide is Ras-related protein Rab-18-B (rab18b) (Danio rerio (Zebrafish)).